The chain runs to 132 residues: Small ribosomal subunit protein uS11c (132 aa).

Belongs to the universal ribosomal protein uS11 family. In terms of assembly, part of the 30S ribosomal subunit.

It is found in the plastid. Its subcellular location is the chloroplast. The polypeptide is Small ribosomal subunit protein uS11c (Gnetum parvifolium (Small-leaved jointfir)).